The following is a 360-amino-acid chain: CFA/I fimbrial subunit E (360 aa).

It is found in the fimbrium. This chain is CFA/I fimbrial subunit E (cfaE), found in Escherichia coli.